Consider the following 338-residue polypeptide: Tryptophan--tRNA ligase (338 aa).

Residues 11 to 13 and 19 to 20 contribute to the ATP site; these read QPS and GN. Residues 12 to 20 carry the 'HIGH' region motif; sequence PSGELSIGN. D135 is an L-tryptophan binding site. ATP contacts are provided by residues 147 to 149, V189, and 198 to 202; these read GSD and KMSKS. The 'KMSKS' region signature appears at 198–202; it reads KMSKS.

Belongs to the class-I aminoacyl-tRNA synthetase family. In terms of assembly, homodimer.

It is found in the cytoplasm. The enzyme catalyses tRNA(Trp) + L-tryptophan + ATP = L-tryptophyl-tRNA(Trp) + AMP + diphosphate + H(+). Its function is as follows. Catalyzes the attachment of tryptophan to tRNA(Trp). This is Tryptophan--tRNA ligase from Vibrio vulnificus (strain CMCP6).